A 130-amino-acid polypeptide reads, in one-letter code: Large ribosomal subunit protein bL17 (130 aa).

It belongs to the bacterial ribosomal protein bL17 family. In terms of assembly, part of the 50S ribosomal subunit. Contacts protein L32.

The sequence is that of Large ribosomal subunit protein bL17 from Photorhabdus laumondii subsp. laumondii (strain DSM 15139 / CIP 105565 / TT01) (Photorhabdus luminescens subsp. laumondii).